Consider the following 81-residue polypeptide: Elongation factor 1-beta (81 aa).

The protein belongs to the EF-1-beta/EF-1-delta family.

Its function is as follows. Promotes the exchange of GDP for GTP in EF-1-alpha/GDP, thus allowing the regeneration of EF-1-alpha/GTP that could then be used to form the ternary complex EF-1-alpha/GTP/AAtRNA. The protein is Elongation factor 1-beta of Nanoarchaeum equitans (strain Kin4-M).